Consider the following 474-residue polypeptide: Adenylyl cyclase-associated protein 1 (474 aa).

The residue at position 2 (alanine 2) is an N-acetylalanine. Position 31 is a phosphotyrosine (tyrosine 31). Serine 34 is modified (phosphoserine). At lysine 80 the chain carries N6-acetyllysine. Disordered stretches follow at residues 215-253 (ELSG…SASR) and 277-316 (MKTH…ATKK). The span at 217-227 (SGLPSGPSVGS) shows a compositional bias: low complexity. The span at 228 to 241 (GPPPPPPGPPPPPI) shows a compositional bias: pro residues. Lysine 286 bears the N6-methyllysine mark. 3 positions are modified to phosphoserine: serine 289, serine 294, and serine 300. Pro residues predominate over residues 299 to 311 (FSAPKPQTSPSPK). A Phosphothreonine modification is found at threonine 306. A phosphoserine mark is found at serine 307 and serine 309. A C-CAP/cofactor C-like domain is found at 312–452 (PATKKEPALL…EGGDFNEFPV (141 aa)). Lysine 347 participates in a covalent cross-link: Glycyl lysine isopeptide (Lys-Gly) (interchain with G-Cter in SUMO1).

Belongs to the CAP family. Homodimer. Binds actin monomers. Ubiquitous.

The protein localises to the cell membrane. In terms of biological role, directly regulates filament dynamics and has been implicated in a number of complex developmental and morphological processes, including mRNA localization and the establishment of cell polarity. This Mus musculus (Mouse) protein is Adenylyl cyclase-associated protein 1 (Cap1).